The chain runs to 108 residues: Succinate dehydrogenase assembly factor 4, mitochondrial (108 aa).

The transit peptide at 1–20 (MTPSRLPWLLSWVSATAWRA) directs the protein to the mitochondrion. A disordered region spans residues 31-108 (RKTSSSQGGK…WERKGRCIDF (78 aa)). Composition is skewed to basic and acidic residues over residues 52 to 87 (KLPEGRFDAPEDSHLEKEPLEKFPDDVNPVTKEKGG) and 95 to 108 (RYGDWERKGRCIDF).

It belongs to the SDHAF4 family. As to quaternary structure, interacts with SDHA in its FAD-bound form.

It localises to the mitochondrion matrix. Functionally, plays an essential role in the assembly of succinate dehydrogenase (SDH), an enzyme complex (also referred to as respiratory complex II) that is a component of both the tricarboxylic acid (TCA) cycle and the mitochondrial electron transport chain, and which couples the oxidation of succinate to fumarate with the reduction of ubiquinone (coenzyme Q) to ubiquinol. Binds to the flavoprotein subunit SDHA in its FAD-bound form, blocking the generation of excess reactive oxygen species (ROS) and facilitating its assembly with the iron-sulfur protein subunit SDHB into the SDH catalytic dimer. In Homo sapiens (Human), this protein is Succinate dehydrogenase assembly factor 4, mitochondrial.